We begin with the raw amino-acid sequence, 710 residues long: Polyribonucleotide nucleotidyltransferase (710 aa).

Mg(2+) contacts are provided by D489 and D495. Residues 556–615 (PKIDTIKIDVDKIKVVIGKGGETIDKIIAETGVKIDIDDEGNVSIYSSDQAAIDRTKEII) enclose the KH domain. One can recognise an S1 motif domain in the interval 625–693 (GEVYHAKVIR…EKGRVDASMK (69 aa)).

It belongs to the polyribonucleotide nucleotidyltransferase family. It depends on Mg(2+) as a cofactor.

Its subcellular location is the cytoplasm. It carries out the reaction RNA(n+1) + phosphate = RNA(n) + a ribonucleoside 5'-diphosphate. Involved in mRNA degradation. Catalyzes the phosphorolysis of single-stranded polyribonucleotides processively in the 3'- to 5'-direction. This is Polyribonucleotide nucleotidyltransferase from Streptococcus pyogenes serotype M3 (strain ATCC BAA-595 / MGAS315).